Here is a 106-residue protein sequence, read N- to C-terminus: Large ribosomal subunit protein eL42 (106 aa).

It belongs to the eukaryotic ribosomal protein eL42 family.

The protein resides in the cytoplasm. This is Large ribosomal subunit protein eL42 (RPL44) from Trypanosoma brucei brucei.